Here is a 299-residue protein sequence, read N- to C-terminus: 6-phosphogluconate dehydrogenase, NAD(+)-dependent, decarboxylating (299 aa).

Residues 7–12 (GLGRMG), 67–69 (VPA), and Asn95 each bind NAD(+). 3 residues coordinate substrate: Asn95, Ser118, and Gly120. The Proton acceptor role is filled by Lys169. 172-173 (HN) provides a ligand contact to substrate. Glu176 (proton donor) is an active-site residue. The substrate site is built by Tyr177 and Arg268.

It belongs to the 6-phosphogluconate dehydrogenase family. In terms of assembly, homotetramer.

It carries out the reaction 6-phospho-D-gluconate + NAD(+) = D-ribulose 5-phosphate + CO2 + NADH. The protein operates within carbohydrate degradation; pentose phosphate pathway. Its function is as follows. Catalyzes the oxidative decarboxylation of 6-phosphogluconate to ribulose 5-phosphate and CO(2), with concomitant reduction of NAD to NADH. This is 6-phosphogluconate dehydrogenase, NAD(+)-dependent, decarboxylating from Haloferax volcanii (strain ATCC 29605 / DSM 3757 / JCM 8879 / NBRC 14742 / NCIMB 2012 / VKM B-1768 / DS2) (Halobacterium volcanii).